A 337-amino-acid polypeptide reads, in one-letter code: GTP 3',8-cyclase (337 aa).

The Radical SAM core domain occupies 17 to 242 (AFQRRYYYLR…QSKGLLDGPA (226 aa)). Arginine 26 contacts GTP. [4Fe-4S] cluster contacts are provided by cysteine 33 and cysteine 37. Tyrosine 39 is a binding site for S-adenosyl-L-methionine. A [4Fe-4S] cluster-binding site is contributed by cysteine 40. Arginine 76 is a binding site for GTP. Glycine 80 serves as a coordination point for S-adenosyl-L-methionine. Threonine 107 contacts GTP. Serine 131 is a binding site for S-adenosyl-L-methionine. Lysine 168 contacts GTP. Methionine 202 lines the S-adenosyl-L-methionine pocket. [4Fe-4S] cluster-binding residues include cysteine 265 and cysteine 268. 270 to 272 (RLR) is a binding site for GTP. Cysteine 282 provides a ligand contact to [4Fe-4S] cluster.

Belongs to the radical SAM superfamily. MoaA family. Monomer and homodimer. It depends on [4Fe-4S] cluster as a cofactor.

It catalyses the reaction GTP + AH2 + S-adenosyl-L-methionine = (8S)-3',8-cyclo-7,8-dihydroguanosine 5'-triphosphate + 5'-deoxyadenosine + L-methionine + A + H(+). Its pathway is cofactor biosynthesis; molybdopterin biosynthesis. Catalyzes the cyclization of GTP to (8S)-3',8-cyclo-7,8-dihydroguanosine 5'-triphosphate. This Pasteurella multocida (strain Pm70) protein is GTP 3',8-cyclase.